We begin with the raw amino-acid sequence, 353 residues long: MSSKQPSLSYKDAGVDIDAGEALVERIKGVAKRTARPEVMGGLGGFGALCEIPAGYKQPVLVSGTDGVGTKLRLALNLNKHDSIGQDLVAMCVNDLVVCGAEPLFFLDYYATGKLNVDVAATVVTGIGAGCELAGCSLVGGETAEMPGMYEGEDYDLAGFCVGVVEKAEIIDGSRVQAGDALIALPSSGPHSNGYSLIRKIIEVSGADIAQVQLDGKPLADLLMAPTRIYVKPLLQLIKQTGAVKAMAHITGGGLLDNIPRVLPDNAQAVIDVASWNRPAVFDWLQEQGNVDETEMHRVLNCGVGMVICVAQSDAEKALEVLRAAGEQPWQIGRIETCGADAERVVLNNLKNH.

This sequence belongs to the AIR synthase family.

The protein resides in the cytoplasm. It catalyses the reaction 2-formamido-N(1)-(5-O-phospho-beta-D-ribosyl)acetamidine + ATP = 5-amino-1-(5-phospho-beta-D-ribosyl)imidazole + ADP + phosphate + H(+). It participates in purine metabolism; IMP biosynthesis via de novo pathway; 5-amino-1-(5-phospho-D-ribosyl)imidazole from N(2)-formyl-N(1)-(5-phospho-D-ribosyl)glycinamide: step 2/2. The polypeptide is Phosphoribosylformylglycinamidine cyclo-ligase (Pseudomonas aeruginosa (strain ATCC 15692 / DSM 22644 / CIP 104116 / JCM 14847 / LMG 12228 / 1C / PRS 101 / PAO1)).